The primary structure comprises 31 residues: Acetyl-CoA carboxylase (31 aa).

The disordered stretch occupies residues 1-31 (RISSSVIAHKTQLDSGKREVYSSHMQLGGPK). A compositionally biased stretch (basic and acidic residues) spans 11-21 (TQLDSGKREVY).

The enzyme catalyses hydrogencarbonate + acetyl-CoA + ATP = malonyl-CoA + ADP + phosphate + H(+). It functions in the pathway lipid metabolism; malonyl-CoA biosynthesis; malonyl-CoA from acetyl-CoA: step 1/1. The chain is Acetyl-CoA carboxylase from Catharanthus roseus (Madagascar periwinkle).